Consider the following 474-residue polypeptide: ATP-dependent rRNA helicase RRP3 (474 aa).

Residues 1-10 are compositionally biased toward basic residues; sequence MPSMKRRKLS. Residues 1–43 form a disordered region; that stretch reads MPSMKRRKLSHTPPQGEAEDGFSDSETSQASLQETPGNDEKIE. Positions 24–36 are enriched in polar residues; sequence DSETSQASLQETP. The Q motif signature appears at 48–76; sequence KSFKDLGIIDSLCEACDSLGYKAPTQIQA. The Helicase ATP-binding domain maps to 79-250; the sequence is IPLALQGRDL…RASLSNPLRV (172 aa). Residue 92–99 coordinates ATP; it reads AETGSGKT. Residues 198–201 carry the DEAD box motif; the sequence is DEAD. The 145-residue stretch at 278-422 folds into the Helicase C-terminal domain; that stretch reads YLIYLLNEFP…EYKVEKEEVM (145 aa). Residues 442–474 are disordered; that stretch reads LHENRGKKGATLRNRRIGKGAKRSRDEMDREEG. Residues 448–463 are compositionally biased toward basic residues; that stretch reads KKGATLRNRRIGKGAK. The segment covering 464 to 474 has biased composition (basic and acidic residues); sequence RSRDEMDREEG.

The protein belongs to the DEAD box helicase family. DDX47/RRP3 subfamily. Interacts with the SSU processome.

It localises to the nucleus. The catalysed reaction is ATP + H2O = ADP + phosphate + H(+). Its function is as follows. ATP-dependent rRNA helicase required for pre-ribosomal RNA processing. Involved in the maturation of the 35S-pre-rRNA and to its cleavage to mature 18S rRNA. The protein is ATP-dependent rRNA helicase RRP3 of Coccidioides immitis (strain RS) (Valley fever fungus).